We begin with the raw amino-acid sequence, 130 residues long: Small ribosomal subunit protein uS8 (130 aa).

Belongs to the universal ribosomal protein uS8 family. In terms of assembly, part of the 30S ribosomal subunit. Contacts proteins S5 and S12.

Its function is as follows. One of the primary rRNA binding proteins, it binds directly to 16S rRNA central domain where it helps coordinate assembly of the platform of the 30S subunit. In Aster yellows witches'-broom phytoplasma (strain AYWB), this protein is Small ribosomal subunit protein uS8.